Reading from the N-terminus, the 1264-residue chain is Phosphatidylinositol 3,4,5-trisphosphate 5-phosphatase 2 (1264 aa).

The SH2 domain maps to 26-122 (WYHRDLSRAA…GLVCALLLPV (97 aa)). Basic and acidic residues predominate over residues 124-137 (REREPDPPDDRDVS). Residues 124 to 182 (REREPDPPDDRDVSDGEDEKPPLPPRSGSTSISAPVGPGSPPAAPETPTTPAAESAPNG) are disordered. Position 137 is a phosphoserine (serine 137). Residues 169 to 180 (ETPTTPAAESAP) are compositionally biased toward low complexity. Threonine 170 carries the phosphothreonine modification. A phosphoserine mark is found at serine 246 and serine 358. Tyrosine 892 carries the post-translational modification Phosphotyrosine. Phosphoserine is present on serine 896. The tract at residues 903 to 1123 (GAKSKAPSVS…TFLGEVASGD (221 aa)) is disordered. Residues 944–954 (PPPTGRPPAPP) show a composition bias toward pro residues. Residues 950 to 955 (PPAPPR) carry the SH3-binding motif. Over residues 957 to 971 (ASREEPLTPRLKAEG) the composition is skewed to basic and acidic residues. At threonine 964 the chain carries Phosphothreonine. Positions 989–992 (NPAY) match the NPXY motif motif. A Phosphotyrosine modification is found at tyrosine 992. Composition is skewed to pro residues over residues 1002-1017 (LLPP…PVPP), 1054-1065 (LPPPDFPPPPLP), and 1093-1110 (GPPP…PGPS). Serine 1137 is subject to Phosphoserine. The tract at residues 1140–1178 (DYAPAGPGRSVLLPGPLELQPPRGLPSDYGRPLSFPPPR) is disordered. Tyrosine 1141 and tyrosine 1168 each carry phosphotyrosine. The SAM domain occupies 1210–1264 (WLRAIGLERYEEGLVHNGWDDLEFLSDITEEDLEEAGVQDPAHKRLLLDTLQLSK). Serine 1263 carries the post-translational modification Phosphoserine.

Belongs to the inositol 1,4,5-trisphosphate 5-phosphatase family. Interacts with tyrosine phosphorylated form of SHC1. Interacts with EGFR. Upon stimulation by the EGF signaling pathway, it forms a complex with SHC1 and EGFR. Interacts with cytoskeletal protein SORBS3/vinexin, promoting its localization to the periphery of cells. Forms a complex with filamin (FLNA or FLNB), actin, GPIb (GP1BA or GP1BB) that regulates cortical and submembraneous actin. Interacts with c-Met/MET, when c-Met/MET is phosphorylated on 'Tyr-1356'. Interacts with p130Cas/BCAR1. Interacts with CENTD3/ARAP3 via its SAM domain. Interacts with c-Cbl/CBL and CAP/SORBS1. Interacts with activated EPHA2 receptor. Interacts with receptor FCGR2A. Interacts with receptor FCGR2B. Interacts with tyrosine kinase ABL1. Interacts with tyrosine kinase TEC. Interacts with CSF1R. Interacts (via N-terminus) with SH3YL1 (via SH3 domain). Interacts with FCRL6 (tyrosine phosphorylated form). Interacts (via SH2 domain) with tyrosine phosphorylated KLRC1 (via ITIM). Interacts with NEDD9/HEF1. In terms of processing, tyrosine phosphorylated by the members of the SRC family after exposure to a diverse array of extracellular stimuli such as insulin, growth factors such as EGF or PDGF, chemokines, integrin ligands and hypertonic and oxidative stress. May be phosphorylated upon IgG receptor FCGR2B-binding. Phosphorylated at Tyr-992 following cell attachment and spreading. Phosphorylated at Tyr-1168 following EGF signaling pathway stimulation. Phosphorylated at Thr-964 in response to PDGF.

It localises to the cytoplasm. It is found in the cytosol. Its subcellular location is the membrane. The protein resides in the cell projection. The protein localises to the filopodium. It localises to the lamellipodium. It is found in the basal cell membrane. Its subcellular location is the nucleus. The protein resides in the nucleus speckle. The protein localises to the cytoskeleton. It localises to the spindle pole. It carries out the reaction a 1,2-diacyl-sn-glycero-3-phospho-(1D-myo-inositol-3,4,5-trisphosphate) + H2O = a 1,2-diacyl-sn-glycero-3-phospho-(1D-myo-inositol-3,4-bisphosphate) + phosphate. It catalyses the reaction 1,2-dioctanoyl-sn-glycero-3-phospho-(1D-myo-inositol-3,4,5-trisphosphate) + H2O = 1,2-dioctanoyl-sn-glycero-3-phospho-(1D-myo-inositol-3,4-bisphosphate) + phosphate. The catalysed reaction is 1,2-dihexadecanoyl-sn-glycero-3-phospho-(1D-myo-inositol-3,4,5-trisphosphate) + H2O = 1,2-dihexadecanoyl-sn-glycero-3-phospho-(1D-myo-inositol-3,4-bisphosphate) + phosphate. Activated upon translocation to the sites of synthesis of PtdIns(3,4,5)P3 in the membrane. Enzymatic activity is enhanced in the presence of phosphatidylserine. Its function is as follows. Phosphatidylinositol (PtdIns) phosphatase that specifically hydrolyzes the 5-phosphate of phosphatidylinositol-3,4,5-trisphosphate (PtdIns(3,4,5)P3) to produce PtdIns(3,4)P2, thereby negatively regulating the PI3K (phosphoinositide 3-kinase) pathways. Required for correct mitotic spindle orientation and therefore progression of mitosis. Plays a central role in regulation of PI3K-dependent insulin signaling, although the precise molecular mechanisms and signaling pathways remain unclear. While overexpression reduces both insulin-stimulated MAP kinase and Akt activation, its absence does not affect insulin signaling or GLUT4 trafficking. Confers resistance to dietary obesity. May act by regulating AKT2, but not AKT1, phosphorylation at the plasma membrane. Part of a signaling pathway that regulates actin cytoskeleton remodeling. Required for the maintenance and dynamic remodeling of actin structures as well as in endocytosis, having a major impact on ligand-induced EGFR internalization and degradation. Participates in regulation of cortical and submembraneous actin by hydrolyzing PtdIns(3,4,5)P3 thereby regulating membrane ruffling. Regulates cell adhesion and cell spreading. Required for HGF-mediated lamellipodium formation, cell scattering and spreading. Acts as a negative regulator of EPHA2 receptor endocytosis by inhibiting via PI3K-dependent Rac1 activation. Acts as a regulator of neuritogenesis by regulating PtdIns(3,4,5)P3 level and is required to form an initial protrusive pattern, and later, maintain proper neurite outgrowth. Acts as a negative regulator of the FC-gamma-RIIA receptor (FCGR2A). Mediates signaling from the FC-gamma-RIIB receptor (FCGR2B), playing a central role in terminating signal transduction from activating immune/hematopoietic cell receptor systems. Involved in EGF signaling pathway. Upon stimulation by EGF, it is recruited by EGFR and dephosphorylates PtdIns(3,4,5)P3. Plays a negative role in regulating the PI3K-PKB pathway, possibly by inhibiting PKB activity. Down-regulates Fc-gamma-R-mediated phagocytosis in macrophages independently of INPP5D/SHIP1. In macrophages, down-regulates NF-kappa-B-dependent gene transcription by regulating macrophage colony-stimulating factor (M-CSF)-induced signaling. Plays a role in the localization of AURKA and NEDD9/HEF1 to the basolateral membrane at interphase in polarized cysts, thereby mediates cell cycle homeostasis, cell polarization and cilia assembly. Additionally promotion of cilia growth is also facilitated by hydrolysis of (PtdIns(3,4,5)P3) to PtdIns(3,4)P2. Promotes formation of apical membrane-initiation sites during the initial stages of lumen formation via Rho family-induced actin filament organization and CTNNB1 localization to cell-cell contacts. May also hydrolyze PtdIns(1,3,4,5)P4, and could thus affect the levels of the higher inositol polyphosphates like InsP6. Involved in endochondral ossification. This Canis lupus familiaris (Dog) protein is Phosphatidylinositol 3,4,5-trisphosphate 5-phosphatase 2.